A 954-amino-acid chain; its full sequence is MSTTSLQHFPHSYSPFSSSRSLNRMAQSQTSGLDTLAEGSQYALEQLQMSREAAGSGEATDSVGKPKDQFQVDNDNHHNNHSLSNFKNPSQRDPLVEARSTIRKNSASAPVRRRISRACDQCNQLRTKCDGQNPCAHCIEFGLTCEYARERKKRGKASKKDLAAAAAAAAAAATNSGQPNGSSGKEDAALVGGHTSPDRRPTINGRYDPAFEVPRNLNGSAQHSEASGMVGMQNSQHLPPHSQSSMGGGLEGLPLNGYNGLNDSGRPSMPVPELQSLHMLHNSHTNPRSPSSILTHHRYNGGYNDSAYSLMNPQEPNSTSISHFRLGSSTENPPNSFLGLSPPAQSPGWLPLPSPSPANFPSFSMASFSTTLRYPVLHPVLPHIASIIPQSLACDLLDVYFTSSSSSHLSPQSPYVVGYIFRKQSFLHPTKPRVCTPGLLASMLWVAAQTSDAPFLTSPPSARGRVCQKLLELTIGLLRPLIHGPAPGETSPNYAANMVINGVALGGFGVSMDQLGAQSSATGAVDDVATYVHLATVISASEYKAASMRWWTAAWSLARELKLGRELPPNTPHARPDAERDGDPDADLSKRHPPPLITSMGHGPGNTIINITEEEREERRRLWWLLYATDRHLALCYNRPLTLLDKECEGLLQPMNDDLWQAGDFATYRQAGPPVECTGHSMFGYFLPLMTILGEIVDLQQARNHPRFGLAFRNSAECEAQVLEIARQLDVYAQSLKEFETRYTSSLALGAAETEAAMDGSHPNHVSPSGRSSSTVESRVNESIVHTKMVVAYGTHIMHVLHILLAGKWDPINLLDDNDLWISSESFVAAMGHAVGAAEAAAEILEYDPDLSFMPFFFGIYLLQGSFLLLLTADKLQGDASPSVVRACETIVRAHEACVVTLNTEYQRTFRKVMRSALAQVRGRLPEDFGEQQQRRREVLALYRWTGDGSGLAL.

Disordered regions lie at residues 1 to 39 and 51 to 93; these read MSTTSLQHFPHSYSPFSSSRSLNRMAQSQTSGLDTLAEG and REAA…SQRD. Over residues 8 to 21 the composition is skewed to low complexity; the sequence is HFPHSYSPFSSSRS. The segment covering 22 to 33 has biased composition (polar residues); sequence LNRMAQSQTSGL. Over residues 64-78 the composition is skewed to basic and acidic residues; it reads GKPKDQFQVDNDNHH. Over residues 82–91 the composition is skewed to polar residues; that stretch reads SLSNFKNPSQ. The zn(2)-C6 fungal-type DNA-binding region spans 119-145; sequence CDQCNQLRTKCDGQNPCAHCIEFGLTC. 4 disordered regions span residues 173 to 226, 312 to 332, 566 to 607, and 758 to 777; these read ATNS…HSEA, NPQEPNSTSISHFRLGSSTEN, ELPP…PGNT, and MDGSHPNHVSPSGRSSSTVE. Residues 174 to 183 show a composition bias toward polar residues; sequence TNSGQPNGSS. Residues 574 to 590 show a composition bias toward basic and acidic residues; that stretch reads ARPDAERDGDPDADLSK. The span at 764-777 shows a compositional bias: polar residues; sequence NHVSPSGRSSSTVE.

Belongs to the xlnR/xlr1 family.

It is found in the nucleus. Transcriptional activator of the xylanolytic system. Involved in the regulation of extracellular cellulolytic and xylanolytic genes and in the regulation of the intracellular activities of D-xylose catabolic genes in the pentose catabolic pathway (PCP) in response to the presence of D-xylose. The chain is Xylanolytic transcriptional activator xlnR (xlnR) from Aspergillus fumigatus (strain CBS 144.89 / FGSC A1163 / CEA10) (Neosartorya fumigata).